The chain runs to 525 residues: Phosphoenolpyruvate carboxykinase (ATP) (525 aa).

Substrate is bound by residues arginine 52, tyrosine 186, and lysine 192. Residues lysine 192, histidine 211, and 228–236 (GLSGTGKTT) each bind ATP. Mn(2+)-binding residues include lysine 192 and histidine 211. Aspartate 249 contributes to the Mn(2+) binding site. ATP contacts are provided by residues glutamate 277, arginine 314, 433–434 (RI), and threonine 439. Arginine 314 contributes to the substrate binding site.

This sequence belongs to the phosphoenolpyruvate carboxykinase (ATP) family. Mn(2+) is required as a cofactor.

The protein resides in the cytoplasm. The catalysed reaction is oxaloacetate + ATP = phosphoenolpyruvate + ADP + CO2. Its pathway is carbohydrate biosynthesis; gluconeogenesis. Functionally, involved in the gluconeogenesis. Catalyzes the conversion of oxaloacetate (OAA) to phosphoenolpyruvate (PEP) through direct phosphoryl transfer between the nucleoside triphosphate and OAA. This Fusobacterium nucleatum subsp. nucleatum (strain ATCC 25586 / DSM 15643 / BCRC 10681 / CIP 101130 / JCM 8532 / KCTC 2640 / LMG 13131 / VPI 4355) protein is Phosphoenolpyruvate carboxykinase (ATP).